We begin with the raw amino-acid sequence, 334 residues long: Nucleoid-associated protein PMI0825 (334 aa).

Belongs to the YejK family.

It is found in the cytoplasm. It localises to the nucleoid. The sequence is that of Nucleoid-associated protein PMI0825 from Proteus mirabilis (strain HI4320).